Reading from the N-terminus, the 313-residue chain is Methionyl-tRNA formyltransferase (313 aa).

Residue 110 to 113 (SLLP) participates in (6S)-5,6,7,8-tetrahydrofolate binding.

This sequence belongs to the Fmt family.

The enzyme catalyses L-methionyl-tRNA(fMet) + (6R)-10-formyltetrahydrofolate = N-formyl-L-methionyl-tRNA(fMet) + (6S)-5,6,7,8-tetrahydrofolate + H(+). Its function is as follows. Attaches a formyl group to the free amino group of methionyl-tRNA(fMet). The formyl group appears to play a dual role in the initiator identity of N-formylmethionyl-tRNA by promoting its recognition by IF2 and preventing the misappropriation of this tRNA by the elongation apparatus. The sequence is that of Methionyl-tRNA formyltransferase from Enterococcus faecalis (strain ATCC 700802 / V583).